The primary structure comprises 195 residues: CASP-like protein 2C2 (195 aa).

Residues 1–18 lie on the Cytoplasmic side of the membrane; it reads MAATTAAAAVPGVVRAER. Residues 19–39 form a helical membrane-spanning segment; that stretch reads LLRGGCVVMAATAALLLGFSA. The Extracellular portion of the chain corresponds to 40–57; it reads ETKTVLFVRKTAVAKDVQ. Residues 58 to 78 form a helical membrane-spanning segment; the sequence is ALWVLTVAAAAAAGYQFAQLV. Residues 79-106 are Cytoplasmic-facing; the sequence is RCMYCSSSGDAGAMAVAWTSFLLDKGCA. Residues 107–127 form a helical membrane-spanning segment; that stretch reads YVVFASTAAALQACMVGLIGV. The Extracellular portion of the chain corresponds to 128-145; sequence EALQWSKLCNIYTRFCEQ. The chain crosses the membrane as a helical span at residues 146-166; the sequence is AAAGMLCSFLAAAGMAVLSAF. At 167-195 the chain is on the cytoplasmic side; the sequence is SARRLFRLYSPAGHRRSCPRAAVLATSPH.

The protein belongs to the Casparian strip membrane proteins (CASP) family. As to quaternary structure, homodimer and heterodimers.

The protein localises to the cell membrane. This chain is CASP-like protein 2C2, found in Oryza sativa subsp. japonica (Rice).